The following is a 235-amino-acid chain: Ubiquinone biosynthesis O-methyltransferase (235 aa).

S-adenosyl-L-methionine-binding residues include R36, G56, D77, and M122.

Belongs to the methyltransferase superfamily. UbiG/COQ3 family.

The catalysed reaction is a 3-demethylubiquinol + S-adenosyl-L-methionine = a ubiquinol + S-adenosyl-L-homocysteine + H(+). The enzyme catalyses a 3-(all-trans-polyprenyl)benzene-1,2-diol + S-adenosyl-L-methionine = a 2-methoxy-6-(all-trans-polyprenyl)phenol + S-adenosyl-L-homocysteine + H(+). The protein operates within cofactor biosynthesis; ubiquinone biosynthesis. O-methyltransferase that catalyzes the 2 O-methylation steps in the ubiquinone biosynthetic pathway. The protein is Ubiquinone biosynthesis O-methyltransferase of Leptothrix cholodnii (strain ATCC 51168 / LMG 8142 / SP-6) (Leptothrix discophora (strain SP-6)).